Consider the following 128-residue polypeptide: Ribonuclease P protein component (128 aa).

This sequence belongs to the RnpA family. As to quaternary structure, consists of a catalytic RNA component (M1 or rnpB) and a protein subunit.

The catalysed reaction is Endonucleolytic cleavage of RNA, removing 5'-extranucleotides from tRNA precursor.. In terms of biological role, RNaseP catalyzes the removal of the 5'-leader sequence from pre-tRNA to produce the mature 5'-terminus. It can also cleave other RNA substrates such as 4.5S RNA. The protein component plays an auxiliary but essential role in vivo by binding to the 5'-leader sequence and broadening the substrate specificity of the ribozyme. The polypeptide is Ribonuclease P protein component (Prochlorococcus marinus (strain MIT 9215)).